A 473-amino-acid polypeptide reads, in one-letter code: H(+)/Cl(-) exchange transporter ClcA (473 aa).

The Cytoplasmic portion of the chain corresponds to 1-32 (MKTDNSTFLAQQIVRLRRRDQIRRLMQRDKTP). The helical transmembrane segment at 33 to 69 (LAILFMAAVVGTLTGLVGVAFEKAVSWVQNMRIGALV) threads the bilayer. The Periplasmic segment spans residues 70–76 (QVADHAF). Residues 77-100 (LLWPLAFILSALLAMVGYFLVRKF) form a helical membrane-spanning segment. The Selectivity filter part_1 motif lies at 106–110 (GSGIP). S107 serves as a coordination point for chloride. The helical intramembrane region spans 109-116 (IPEIEGAL). At 117–123 (EELRPVR) the chain is on the cytoplasmic side. Transmembrane regions (helical) follow at residues 124-141 (WWRV…TLGA) and 148-166 (EGPT…LDVF). Positions 146–150 (GREGP) match the Selectivity filter part_2 motif. The Cytoplasmic portion of the chain corresponds to 167–176 (RMRSAEARHT). 2 intramembrane regions (helical) span residues 177–189 (LLAT…LSAA) and 193–201 (PLAGILFII). The Cytoplasmic segment spans residues 202-214 (EEMRPQFRYNLIS). Residues 215 to 232 (IKAVFTGVIMSSIVFRIF) form a helical membrane-spanning segment. The Periplasmic segment spans residues 233 to 252 (NGEAPIIEVGKLSDAPVNTL). The chain crosses the membrane as a helical span at residues 253–281 (WLYLILGIIFGCVGPVFNSLVLRTQDMFQ). Over 282–287 (RFHGGE) the chain is Cytoplasmic. The helical transmembrane segment at 288 to 309 (IKKWVLMGGAIGGLCGILGLIE) threads the bilayer. The Periplasmic segment spans residues 310-329 (PEAAGGGFNLIPIAAAGNFS). 2 helical membrane passes run 330 to 349 (VGLL…LCFS) and 355 to 376 (GIFA…MAAA). The Selectivity filter part_3 signature appears at 355 to 359 (GIFAP). Chloride-binding residues include I356 and F357. Topologically, residues 377-386 (VLFPQYHLEA) are periplasmic. Residues 387–401 (GTFAIAGMGALMAAS) constitute an intramembrane region (helical). The segment at residues 402-404 (VRA) is an intramembrane region (note=Loop between two helices). The segment at residues 405–416 (PLTGIVLVLEMT) is an intramembrane region (helical). Residues 417–421 (DNYQL) constitute an intramembrane region (note=Loop between two helices). Residues 422 to 438 (ILPMIITCLGATLLAQF) traverse the membrane as a helical segment. Over 439 to 473 (LGGKPLYSTILARTLAKQDAEQAAKNQNAPAGENT) the chain is Cytoplasmic. Residue Y445 participates in chloride binding.

This sequence belongs to the chloride channel (TC 2.A.49) family. ClcA subfamily. As to quaternary structure, homodimer.

Its subcellular location is the cell inner membrane. The catalysed reaction is 2 chloride(in) + H(+)(out) = 2 chloride(out) + H(+)(in). Its function is as follows. Proton-coupled chloride transporter. Functions as antiport system and exchanges two chloride ions for 1 proton. Probably acts as an electrical shunt for an outwardly-directed proton pump that is linked to amino acid decarboxylation, as part of the extreme acid resistance (XAR) response. The protein is H(+)/Cl(-) exchange transporter ClcA of Salmonella schwarzengrund (strain CVM19633).